Consider the following 237-residue polypeptide: MAMFRSLVASAQQRQPPAGPAGGDSGLEAQYTCPICLEVYHRPVAIGSCGHTFCGECLQPCLQVPSPLCPLCRLPFDPKKVDKATHVEKQLSSYKAPCRGCNKKVTLAKMRVHISSCLKVQEQMANCPKFVPVVPTSQPIPSNIPNRSTFACPYCGARNLDQQELVKHCVESHRSDPNRVVCPICSAMPWGDPSYKSANFLQHLLHRHKFSYDTFVDYSIDEEAAFQAALALSLSEN.

The segment at 33 to 73 (CPICLEVYHRPVAIGSCGHTFCGECLQPCLQVPSPLCPLCR) adopts an RING-type zinc-finger fold. Zn(2+) is bound by residues Cys-98, Cys-101, His-113, and Cys-117. The C2HC RNF-type zinc finger occupies 98–117 (CRGCNKKVTLAKMRVHISSC). The region spanning 221 to 237 (DEEAAFQAALALSLSEN) is the UIM domain.

The protein localises to the cytoplasm. It carries out the reaction S-ubiquitinyl-[E2 ubiquitin-conjugating enzyme]-L-cysteine + [acceptor protein]-L-lysine = [E2 ubiquitin-conjugating enzyme]-L-cysteine + N(6)-ubiquitinyl-[acceptor protein]-L-lysine.. Its pathway is protein modification; protein ubiquitination. In terms of biological role, E3 ubiquitin-protein ligase that promotes the ubiquitination of different substrates. In turn, participates in different biological processes including interferon production or autophagy. Plays a role in the activation of RNA virus-induced interferon-beta production by promoting the ubiquitination of TRAF3 and TRAF6. Also plays a role in the early recruitment of autophagy adapters to bacteria. Mediates 'Lys-29' and 'Lys-33'-linked ubiquitination of SQSTM1 leading to xenophagic targeting of bacteria and inhibition of their replication. This is E3 ubiquitin-protein ligase RNF166 (RNF166) from Homo sapiens (Human).